The following is a 179-amino-acid chain: Sodium/potassium-transporting ATPase subunit beta-1-interacting protein 3 (179 aa).

4 helical membrane passes run 5–22 (TGRC…LVAL), 35–55 (APIL…FGTI), 62–82 (IVAY…IICF), and 151–171 (AVQI…ISVI).

It belongs to the NKAIN family. Interacts with atp1b1 C-terminus.

Its subcellular location is the cell membrane. The chain is Sodium/potassium-transporting ATPase subunit beta-1-interacting protein 3 (nkain3) from Xenopus laevis (African clawed frog).